The chain runs to 514 residues: MKFKLLLAGSLVAVGAMALLASNINEKEKQRVELAKAPSEAGIAGKEKSEEWAKYYPRQFDSWKKTKEYDSFTDMLAKDPALVIAWSGYAFSKDYNSPRGHYYALQDNVNSLRTGAPVDAKTGPLPTACWTCKSPDVPRLIEEDGELEYFTGKWAKYGSQIVNVIGCANCHDDKTAELKVRVPHLNRGLQAAGLKTFEESTHQDKRTLVCAQCHVEYYFKKTEWKDAKGADKTAMVVTLPWANGVGKDGNAGVEGMIKYYDEINFSDWTHNISKTPMLKAQHPGFEFWKSGIHGQKGVSCADCHMPYTQEGSVKYSDHQVKENPLDSMDQSCMNCHRESESKLRGIVHQKYERKEFLNKVAFDNIGKAHLETGKAIEAGASDEELKEVRKLIRHGQFKADMAIAAHGNYFHAPEETLRLLAAGSDDAQKARLLLVKILAKHGVMDYIAPDFDTKDKAQKLAKVDIAALAAEKMKFKQTLEQEWKKEAKAKGRANPELYKDVDTINDGKSSWNKK.

The first 21 residues, Met-1–Ala-21, serve as a signal peptide directing secretion. The heme c site is built by His-101, Cys-129, Cys-132, Lys-133, Cys-167, Cys-170, His-171, Cys-210, Cys-213, and His-214. Ca(2+)-binding residues include Glu-216, Tyr-217, Lys-279, and Gln-281. Residue Tyr-217 participates in substrate binding. His-282 contributes to the substrate binding site. Residues His-293, Cys-300, Cys-303, His-304, His-318, Cys-332, Cys-335, His-336, and His-411 each coordinate heme c.

This sequence belongs to the cytochrome c-552 family. As to quaternary structure, homodimer. Probably also exists as a membrane-associated heterooligomeric complex. Requires Ca(2+) as cofactor. It depends on heme c as a cofactor.

Its subcellular location is the periplasm. The catalysed reaction is 6 Fe(III)-[cytochrome c] + NH4(+) + 2 H2O = 6 Fe(II)-[cytochrome c] + nitrite + 8 H(+). It participates in nitrogen metabolism; nitrate reduction (assimilation). Catalyzes the reduction of nitrite to ammonia, consuming six electrons in the process. Has very low activity toward hydroxylamine, and even lower activity toward sulfite. Sulfite reductase activity is maximal at neutral pH. This Sulfurospirillum deleyianum protein is Cytochrome c-552 (nrfA).